The primary structure comprises 601 residues: Jacalin-related lectin 3 (601 aa).

Jacalin-type lectin domains follow at residues 13-155 (PASL…HTQP), 240-382 (AKTY…HVME), and 438-583 (PSGP…HMQH).

This sequence belongs to the jacalin lectin family.

The polypeptide is Jacalin-related lectin 3 (JAL3) (Arabidopsis thaliana (Mouse-ear cress)).